We begin with the raw amino-acid sequence, 263 residues long: Small ribosomal subunit protein bS1c (263 aa).

S1 motif domains follow at residues 27–96 (GDIV…LSIR), 114–178 (DSLL…LSHR), and 192–260 (GNII…LSMK).

The protein belongs to the bacterial ribosomal protein bS1 family.

It localises to the plastid. Its subcellular location is the chloroplast. The sequence is that of Small ribosomal subunit protein bS1c (rps1) from Porphyra purpurea (Red seaweed).